Here is a 284-residue protein sequence, read N- to C-terminus: Bifunctional protein FolD (284 aa).

NADP(+) contacts are provided by residues 166 to 168 (GAS) and I232.

Belongs to the tetrahydrofolate dehydrogenase/cyclohydrolase family. Homodimer.

It catalyses the reaction (6R)-5,10-methylene-5,6,7,8-tetrahydrofolate + NADP(+) = (6R)-5,10-methenyltetrahydrofolate + NADPH. The enzyme catalyses (6R)-5,10-methenyltetrahydrofolate + H2O = (6R)-10-formyltetrahydrofolate + H(+). It functions in the pathway one-carbon metabolism; tetrahydrofolate interconversion. Catalyzes the oxidation of 5,10-methylenetetrahydrofolate to 5,10-methenyltetrahydrofolate and then the hydrolysis of 5,10-methenyltetrahydrofolate to 10-formyltetrahydrofolate. The chain is Bifunctional protein FolD from Pseudomonas putida (strain W619).